Here is a 188-residue protein sequence, read N- to C-terminus: dCTP deaminase (188 aa).

Residues Lys-111–Arg-116, Thr-135–Glu-137, Gln-156, Tyr-170, Lys-179, and Gln-180 contribute to the dCTP site. Glu-137 acts as the Proton donor/acceptor in catalysis.

This sequence belongs to the dCTP deaminase family. In terms of assembly, homotrimer.

It carries out the reaction dCTP + H2O + H(+) = dUTP + NH4(+). Its pathway is pyrimidine metabolism; dUMP biosynthesis; dUMP from dCTP (dUTP route): step 1/2. In terms of biological role, catalyzes the deamination of dCTP to dUTP. The sequence is that of dCTP deaminase from Rickettsia africae (strain ESF-5).